We begin with the raw amino-acid sequence, 214 residues long: 3-isopropylmalate dehydratase small subunit (214 aa).

It belongs to the LeuD family. LeuD type 1 subfamily. In terms of assembly, heterodimer of LeuC and LeuD.

The enzyme catalyses (2R,3S)-3-isopropylmalate = (2S)-2-isopropylmalate. It participates in amino-acid biosynthesis; L-leucine biosynthesis; L-leucine from 3-methyl-2-oxobutanoate: step 2/4. Catalyzes the isomerization between 2-isopropylmalate and 3-isopropylmalate, via the formation of 2-isopropylmaleate. The sequence is that of 3-isopropylmalate dehydratase small subunit from Pseudomonas putida (strain ATCC 47054 / DSM 6125 / CFBP 8728 / NCIMB 11950 / KT2440).